Reading from the N-terminus, the 508-residue chain is RanBP-type and C3HC4-type zinc finger-containing protein 1 (508 aa).

M1 bears the N-acetylmethionine mark. The interval M1–R218 is interaction with IRF3. Residues M1–Q268 form an interaction with TAB2 region. S50 carries the post-translational modification Phosphoserine. One can recognise a Ubiquitin-like domain in the interval I55–I119. The interval V69–L131 is interaction with RNF31. The segment at Q163–P191 is disordered. The segment at P188–E220 adopts a RanBP2-type zinc-finger fold. Residues D231 to N259 adopt a coiled-coil conformation. The tract at residues E276–C504 is TRIAD supradomain. Residues C280, C283, C298, H300, C303, C306, and C321 each contribute to the Zn(2+) site. The RING-type 1 zinc-finger motif lies at C280–C330. Y328 carries the post-translational modification Phosphotyrosine. Positions 330, 369, 374, 389, 392, 397, 400, 404, 409, 445, and 448 each coordinate Zn(2+). The IBR-type zinc-finger motif lies at Q349 to C409. The RING-type 2; atypical zinc-finger motif lies at C445–T474. Residue C458 is part of the active site. Residues C463 and C466 each coordinate Zn(2+).

Belongs to the RBR family. Component of the LUBAC complex (linear ubiquitin chain assembly complex) which consists of SHARPIN, RBCK1 and RNF31. LUBAC has a MW of approximately 600 kDa suggesting a heteromultimeric assembly of its subunits. Interacts with beta-I-type (PRKCB1) and zeta-type protein kinase C (PRKCZ). Interacts with UBE2L3. Interacts with IREB2 only in iron-rich conditions. Associates with the TNF-R1 signaling complex (TNF-RSC) in a stimulation-dependent manner. Interacts with EYA1, TAB2, TAB3, MAP3K7 TRAF6 and RIPK1. Interacts with IRF3. Auto-ubiquitinated. Auto-ubiquitination leads to degradation by the proteasome. In terms of processing, phosphorylated. In vitro, phosphorylation inhibits auto-ubiquitination activity.

It carries out the reaction [E2 ubiquitin-conjugating enzyme]-S-ubiquitinyl-L-cysteine + [acceptor protein]-L-lysine = [E2 ubiquitin-conjugating enzyme]-L-cysteine + [acceptor protein]-N(6)-ubiquitinyl-L-lysine.. Its pathway is protein modification; protein ubiquitination. Functionally, E3 ubiquitin-protein ligase, which accepts ubiquitin from specific E2 ubiquitin-conjugating enzymes, such as UBE2L3/UBCM4, and then transfers it to substrates. Functions as an E3 ligase for oxidized IREB2 and both heme and oxygen are necessary for IREB2 ubiquitination. Promotes ubiquitination of TAB2 and IRF3 and their degradation by the proteasome. Component of the LUBAC complex which conjugates linear ('Met-1'-linked) polyubiquitin chains to substrates and plays a key role in NF-kappa-B activation and regulation of inflammation. LUBAC conjugates linear polyubiquitin to IKBKG and RIPK1 and is involved in activation of the canonical NF-kappa-B and the JNK signaling pathways. Linear ubiquitination mediated by the LUBAC complex interferes with TNF-induced cell death and thereby prevents inflammation. LUBAC is recruited to the TNF-R1 signaling complex (TNF-RSC) following polyubiquitination of TNF-RSC components by BIRC2 and/or BIRC3 and to conjugate linear polyubiquitin to IKBKG and possibly other components contributing to the stability of the complex. The LUBAC complex is also involved in innate immunity by conjugating linear polyubiquitin chains at the surface of bacteria invading the cytosol to form the ubiquitin coat surrounding bacteria. LUBAC is not able to initiate formation of the bacterial ubiquitin coat, and can only promote formation of linear polyubiquitins on pre-existing ubiquitin. The bacterial ubiquitin coat acts as an 'eat-me' signal for xenophagy and promotes NF-kappa-B activation. Together with OTULIN, the LUBAC complex regulates the canonical Wnt signaling during angiogenesis. Binds polyubiquitin of different linkage types. The sequence is that of RanBP-type and C3HC4-type zinc finger-containing protein 1 (Rbck1) from Mus musculus (Mouse).